The primary structure comprises 358 residues: PqqA peptide cyclase (358 aa).

The Radical SAM core domain occupies 4–219 (PSPPMSLLAE…VEAERAKGGL (216 aa)). [4Fe-4S] cluster-binding residues include Cys-18, Cys-22, and Cys-25.

Belongs to the radical SAM superfamily. PqqE family. In terms of assembly, interacts with PqqD. The interaction is necessary for activity of PqqE. Requires [4Fe-4S] cluster as cofactor.

The catalysed reaction is [PQQ precursor protein] + S-adenosyl-L-methionine = E-Y cross-linked-[PQQ precursor protein] + 5'-deoxyadenosine + L-methionine + H(+). The protein operates within cofactor biosynthesis; pyrroloquinoline quinone biosynthesis. Functionally, catalyzes the cross-linking of a glutamate residue and a tyrosine residue in the PqqA protein as part of the biosynthesis of pyrroloquinoline quinone (PQQ). This chain is PqqA peptide cyclase, found in Gluconobacter oxydans (strain 621H) (Gluconobacter suboxydans).